A 157-amino-acid polypeptide reads, in one-letter code: Phosphopantetheine adenylyltransferase (157 aa).

Serine 9 contributes to the substrate binding site. ATP is bound by residues 9–10 and histidine 17; that span reads SF. Residues lysine 41, leucine 73, and lysine 87 each contribute to the substrate site. ATP-binding positions include 88 to 90, glutamate 98, and 123 to 129; these read GLR and YSYLSSS.

It belongs to the bacterial CoaD family. Homohexamer. Requires Mg(2+) as cofactor.

The protein localises to the cytoplasm. It carries out the reaction (R)-4'-phosphopantetheine + ATP + H(+) = 3'-dephospho-CoA + diphosphate. It functions in the pathway cofactor biosynthesis; coenzyme A biosynthesis; CoA from (R)-pantothenate: step 4/5. Functionally, reversibly transfers an adenylyl group from ATP to 4'-phosphopantetheine, yielding dephospho-CoA (dPCoA) and pyrophosphate. This Alkaliphilus metalliredigens (strain QYMF) protein is Phosphopantetheine adenylyltransferase.